Here is a 791-residue protein sequence, read N- to C-terminus: Probable potassium transporter 11 (791 aa).

The Cytoplasmic portion of the chain corresponds to 1 to 49; the sequence is MASLSESEGTNRGSMWELDQNLDQPMDEEASRLKNMYREKKFSSLLLLR. A helical transmembrane segment spans residues 50-70; sequence LAFQSLGVVFGDLGTSPLYVF. Over 71–87 the chain is Extracellular; it reads YNAFPHGVDDEEDVIGA. Residues 88–108 form a helical membrane-spanning segment; that stretch reads LSLIIYTLTLIPLLKYVFVVL. At 109–175 the chain is on the cytoplasmic side; that stretch reads RANDNGQGGT…EAHAYKRNCL (67 aa). Residues 176-196 form a helical membrane-spanning segment; sequence LIVVLIGTCTAIGDGILTPAI. Residues 197 to 215 are Extracellular-facing; it reads SVLSASGGIKVQNPNMSTD. N-linked (GlcNAc...) asparagine glycosylation is present at asparagine 211. A helical membrane pass occupies residues 216-236; sequence VVVIVSVIILIGLFSMQHYGT. Residues 237 to 238 are Cytoplasmic-facing; the sequence is DK. The helical transmembrane segment at 239-259 threads the bilayer; it reads VGWLFAPIVLLWFILIGSVGA. The Extracellular segment spans residues 260–289; sequence LNIHKYKGSVLKAYNPVYIYRYFQRRNSDS. Residues 290–310 form a helical membrane-spanning segment; it reads WASLGGIMLSITGTEALFADL. Over 311–315 the chain is Cytoplasmic; the sequence is CHFPV. Residues 316 to 338 traverse the membrane as a helical segment; the sequence is FAIQIAFTLIVFPCLLLAYTGQA. Over 339 to 359 the chain is Extracellular; that stretch reads AYIIAHKDHVADAFYRSIPDS. The chain crosses the membrane as a helical span at residues 360–380; sequence IYWPAFVIATAAAIVASQATI. The Cytoplasmic portion of the chain corresponds to 381 to 411; that stretch reads SATYSIIKQALALGCFPRVKIVHTSKKFLGQ. The chain crosses the membrane as a helical span at residues 412-432; that stretch reads IYIPDINWVLLILCIAVTAGF. The Extracellular portion of the chain corresponds to 433-444; it reads KNQSQIGNAYGT. An N-linked (GlcNAc...) asparagine glycan is attached at asparagine 434. The helical transmembrane segment at 445 to 465 threads the bilayer; the sequence is AVVIVMLVTTFLMVPIMLLVW. At 466–468 the chain is on the cytoplasmic side; sequence KSH. The chain crosses the membrane as a helical span at residues 469–489; that stretch reads WILVVTFIVLSLMVEIPYFSA. Residues 490–496 are Extracellular-facing; that stretch reads CLLKIDQ. Residues 497–517 form a helical membrane-spanning segment; sequence GGWVPLVIATAFFIIMYVWHF. At 518–791 the chain is on the cytoplasmic side; that stretch reads CTVKRYEFEM…LLNVGQIYYI (274 aa).

Belongs to the HAK/KUP transporter (TC 2.A.72.3) family.

The protein resides in the membrane. High-affinity potassium transporter. The polypeptide is Probable potassium transporter 11 (Oryza sativa subsp. japonica (Rice)).